We begin with the raw amino-acid sequence, 140 residues long: Putative nickel-responsive regulator (140 aa).

Residues His81, His92, His94, and Cys100 each contribute to the Ni(2+) site.

It belongs to the transcriptional regulatory CopG/NikR family. Ni(2+) is required as a cofactor.

Functionally, transcriptional regulator. This is Putative nickel-responsive regulator from Methanocella arvoryzae (strain DSM 22066 / NBRC 105507 / MRE50).